A 274-amino-acid polypeptide reads, in one-letter code: Large ribosomal subunit protein uL2cz/uL2cy (274 aa).

Disordered regions lie at residues 1–20 and 223–274; these read MAIH…AVDS and MNPV…RRSK.

Belongs to the universal ribosomal protein uL2 family. In terms of assembly, part of the 50S ribosomal subunit.

The protein localises to the plastid. Its subcellular location is the chloroplast. The sequence is that of Large ribosomal subunit protein uL2cz/uL2cy (rpl2-A) from Eucalyptus globulus subsp. globulus (Tasmanian blue gum).